A 325-amino-acid chain; its full sequence is Tetraacyldisaccharide 4'-kinase (325 aa).

55-62 contributes to the ATP binding site; the sequence is TAGGNGKT.

Belongs to the LpxK family.

It carries out the reaction a lipid A disaccharide + ATP = a lipid IVA + ADP + H(+). It participates in glycolipid biosynthesis; lipid IV(A) biosynthesis; lipid IV(A) from (3R)-3-hydroxytetradecanoyl-[acyl-carrier-protein] and UDP-N-acetyl-alpha-D-glucosamine: step 6/6. Functionally, transfers the gamma-phosphate of ATP to the 4'-position of a tetraacyldisaccharide 1-phosphate intermediate (termed DS-1-P) to form tetraacyldisaccharide 1,4'-bis-phosphate (lipid IVA). The chain is Tetraacyldisaccharide 4'-kinase from Citrobacter koseri (strain ATCC BAA-895 / CDC 4225-83 / SGSC4696).